The sequence spans 146 residues: MKLHELKAAEGSRRVRNRVGRGAATGNGKTSGRGQKGQKARSGGKLRPGFEGGQLPLFRRLPKRGFTNINRKEYAIVNLDQLNKFEDGTEVTPALLVESGVVKNEKSGIKVLGNGSLDKKLTVKAHKFSASAAEAIDAKGGAHEVI.

Residues 1 to 13 are compositionally biased toward basic and acidic residues; it reads MKLHELKAAEGSR. The segment at 1–56 is disordered; that stretch reads MKLHELKAAEGSRRVRNRVGRGAATGNGKTSGRGQKGQKARSGGKLRPGFEGGQLP. A compositionally biased stretch (gly residues) spans 23 to 35; it reads AATGNGKTSGRGQ.

The protein belongs to the universal ribosomal protein uL15 family. As to quaternary structure, part of the 50S ribosomal subunit.

Binds to the 23S rRNA. The protein is Large ribosomal subunit protein uL15 of Staphylococcus epidermidis (strain ATCC 35984 / DSM 28319 / BCRC 17069 / CCUG 31568 / BM 3577 / RP62A).